The chain runs to 481 residues: Serine/threonine-protein kinase US3 (481 aa).

The interval 12-63 (GQGRRKEEAVPPETKPSRVFPHGPFYTPAEDACLDSPPPETPKPSHTTPPSE) is disordered. In terms of domain architecture, Protein kinase spans 191 to 478 (FTIHGALTPG…AAELLCLPLF (288 aa)). Residues 197 to 205 (LTPGSEGCV) and Lys220 each bind ATP. The active-site Proton acceptor is Asp305.

The protein belongs to the protein kinase superfamily. Ser/Thr protein kinase family. Interacts with host LAT; this interaction prevents LAT activation of TRAF6. In terms of processing, phosphorylated by UL13; this phosphorylation regulates subsequent phosphorylation of UL31 and UL34 by US3. Autophosphorylated.

The protein localises to the host cytoplasm. Its subcellular location is the host nucleus. The enzyme catalyses L-seryl-[protein] + ATP = O-phospho-L-seryl-[protein] + ADP + H(+). The catalysed reaction is L-threonyl-[protein] + ATP = O-phospho-L-threonyl-[protein] + ADP + H(+). Functionally, multifunctional serine/threonine kinase that plays a role in several processes including egress of virus particles from the nucleus, modulation of the actin cytoskeleton and inhibition of host immune response. Phosphorylates UL31 and UL34, two critical regulators of capsid budding from nucleus to endoplasmic reticulum, thereby facilitating virion egress. Modulates and redistributes host components of the nuclear envelope, including LMNA, emerin/EMD and the nuclear matrix protein MATR3. In turn, facilitates nuclear pore impairment and capsid release through impaired nuclear envelope. Phosphorylates envelope glycoprotein B (gB), probably to direct it to the cell surface. Promotes virus intracellular spread by restructuring host cell cytoskeleton. Blocks host apoptosis to extend cell survival and allow efficient viral replication. Promotes viral gene expression by phosphorylating host HDAC2 to reduce viral genome silencing. Strongly inhibits TCR-activated signal transduction in T-cells by reducing the ubiquitination of LAT and TRAF6, leading to a suboptimal activation of LAT. Subverts host antiviral innate immunity by inhibiting type I interferon production through hyperphosphorylation of beta-catenin/CTNNB1. In addition, phosphorylates the RNA sensor RIGI and the transcription factor IRF3 to prevent the RLR-mediated antiviral signaling pathway. Hyperphosphorylates host RELA and thereby dampens NF-kappa-B signaling. Acts as an immunoevasin partly responsible for inhibition of MR1 expression and antigen presentation in response to bacterial infection. The sequence is that of Serine/threonine-protein kinase US3 (US3) from Human herpesvirus 1 (strain 17) (HHV-1).